Here is an 82-residue protein sequence, read N- to C-terminus: Small ribosomal subunit protein bS16 (82 aa).

The protein belongs to the bacterial ribosomal protein bS16 family.

This is Small ribosomal subunit protein bS16 from Caldanaerobacter subterraneus subsp. tengcongensis (strain DSM 15242 / JCM 11007 / NBRC 100824 / MB4) (Thermoanaerobacter tengcongensis).